The sequence spans 187 residues: dTTP/UTP pyrophosphatase (187 aa).

Catalysis depends on aspartate 68, which acts as the Proton acceptor.

This sequence belongs to the Maf family. YhdE subfamily. Requires a divalent metal cation as cofactor.

It localises to the cytoplasm. The catalysed reaction is dTTP + H2O = dTMP + diphosphate + H(+). It catalyses the reaction UTP + H2O = UMP + diphosphate + H(+). Functionally, nucleoside triphosphate pyrophosphatase that hydrolyzes dTTP and UTP. May have a dual role in cell division arrest and in preventing the incorporation of modified nucleotides into cellular nucleic acids. The chain is dTTP/UTP pyrophosphatase from Thermus thermophilus (strain ATCC BAA-163 / DSM 7039 / HB27).